Consider the following 284-residue polypeptide: Ermin (284 aa).

Positions 1–23 (MTDVPATFTQAECNGDKPPENGQ) are disordered. Phosphoserine is present on Ser73. The disordered stretch occupies residues 110 to 251 (REGHQWEKIP…PTLGKKSDIS (142 aa)). 2 stretches are compositionally biased toward basic and acidic residues: residues 126–140 (EIRRQKERITEQPLK) and 171–183 (LHSKHDEEQKVWD). Positions 184-200 (EEIDDDDDDNCNNDEDE) are enriched in acidic residues. Residues 201-220 (VRVIEFKKKHEEVSQFKEEG) are compositionally biased toward basic and acidic residues. Phosphoserine is present on residues Ser214, Ser226, Ser230, and Ser233. A compositionally biased stretch (low complexity) spans 225 to 235 (DSPLSSASSQA). Phosphothreonine is present on Thr237. A binds actin region spans residues 265 to 284 (KIRKGNTKQRIDEFESMMHL).

As to quaternary structure, binds actin. In terms of tissue distribution, highly expressed in adult and fetal brain. Expressed at intermediate levels in the lung and liver.

It localises to the cytoplasm. It is found in the cytoskeleton. Functionally, plays a role in cytoskeletal rearrangements during the late wrapping and/or compaction phases of myelinogenesis as well as in maintenance and stability of myelin sheath in the adult. May play an important role in late-stage oligodendroglia maturation, myelin/Ranvier node formation during CNS development, and in the maintenance and plasticity of related structures in the mature CNS. This Homo sapiens (Human) protein is Ermin (ERMN).